Reading from the N-terminus, the 503-residue chain is Podocalyxin (503 aa).

The first 21 residues, 1–21 (MPPTTALSALLLLLLSPASHS), serve as a signal peptide directing secretion. The segment at 19-236 (SHSHNGNETS…PLTSQTPGIT (218 aa)) is disordered. The span at 20-50 (HSHNGNETSTSAIKSSTVQSHQSATTSTEVT) shows a compositional bias: polar residues. Residues 22–404 (HNGNETSTSA…PPEVNEDRFS (383 aa)) are Extracellular-facing. N-linked (GlcNAc...) asparagine glycosylation is found at Asn25, Asn89, and Asn94. Residues 61-91 (STQPSNPTPFTTSTQSPSMPTSTPNPTSNQS) show a composition bias toward low complexity. Low complexity predominate over residues 107-126 (TSSPSSTAFTSSSGQTASSG). The segment covering 131–183 (DSFTTAPTTTLGLINVSSQPTDLNTTSKLLSTPTTDNTTSPQQPVDSSPSTAS) has biased composition (polar residues). 4 N-linked (GlcNAc...) asparagine glycosylation sites follow: Asn145, Asn154, Asn167, and Asn206. A compositionally biased stretch (low complexity) spans 196–208 (SSSGSTPSTDNST). The segment covering 222 to 236 (SEATQPLTSQTPGIT) has biased composition (polar residues). Asn303 carries N-linked (GlcNAc...) asparagine glycosylation. A helical transmembrane segment spans residues 405–425 (LPLIITIVCMASFLLLVAALY). Over 426-503 (GCCHQRISQR…DLDEEEDTHL (78 aa)) the chain is Cytoplasmic. Thr463 is modified (phosphothreonine). At Ser482 the chain carries Phosphoserine. Thr501 bears the Phosphothreonine mark.

The protein belongs to the podocalyxin family. In terms of assembly, monomer; when associated with the membrane raft. Oligomer; when integrated in the apical membrane. Found in a complex with EZR, PODXL and NHERF2. Associates with the actin cytoskeleton through complex formation with EZR and NHERF2. Interacts (via the C-terminal PDZ-binding motif DTHL) with NHERF1 (via the PDZ domains); interaction is not detected in glomerular epithelium cells, take place early in the secretory pathway and is necessary for its apical membrane sorting. Interacts (via the C-terminal PDZ-binding motif DTHL) with NHERF2 (via the PDZ 1 domain); interaction is detected in glomerular epithelium cells. Interacts with EZR. N- and O-linked glycosylated. Sialoglycoprotein. Expressed in liver cells and hematopoietic cells (at protein level). Glomerular epithelium cell (podocyte).

The protein localises to the apical cell membrane. It is found in the cell projection. The protein resides in the microvillus. It localises to the membrane raft. Its subcellular location is the lamellipodium. The protein localises to the filopodium. It is found in the ruffle. The protein resides in the membrane. Involved in the regulation of both adhesion and cell morphology and cancer progression. Functions as an anti-adhesive molecule that maintains an open filtration pathway between neighboring foot processes in the podocyte by charge repulsion. Acts as a pro-adhesive molecule, enhancing the adherence of cells to immobilized ligands, increasing the rate of migration and cell-cell contacts in an integrin-dependent manner. Induces the formation of apical actin-dependent microvilli. Involved in the formation of a preapical plasma membrane subdomain to set up initial epithelial polarization and the apical lumen formation during renal tubulogenesis. Plays a role in cancer development and aggressiveness by inducing cell migration and invasion through its interaction with the actin-binding protein EZR. Affects EZR-dependent signaling events, leading to increased activities of the MAPK and PI3K pathways in cancer cells. The polypeptide is Podocalyxin (Podxl) (Mus musculus (Mouse)).